The following is a 55-amino-acid chain: MAARNEIRPIVKLKSTAGTGYTYVTRKNRRNDPDRLVMKKYDPVGRKHVDFREEK.

This sequence belongs to the bacterial ribosomal protein bL33 family.

The chain is Large ribosomal subunit protein bL33B from Rhodococcus jostii (strain RHA1).